Reading from the N-terminus, the 371-residue chain is Cytoplasmic tRNA 2-thiolation protein 2 (371 aa).

Belongs to the CTU2/NCS2 family.

It is found in the cytoplasm. Its pathway is tRNA modification; 5-methoxycarbonylmethyl-2-thiouridine-tRNA biosynthesis. In terms of biological role, plays a central role in 2-thiolation of mcm(5)S(2)U at tRNA wobble positions of tRNA(Lys), tRNA(Glu) and tRNA(Gln). May act by forming a heterodimer with ncs6 that ligates sulfur from thiocarboxylated urm1 onto the uridine of tRNAs at wobble position. Prior mcm(5) tRNA modification by the elongator complex is required for 2-thiolation. May also be involved in protein urmylation. The polypeptide is Cytoplasmic tRNA 2-thiolation protein 2 (ncs2) (Sclerotinia sclerotiorum (strain ATCC 18683 / 1980 / Ss-1) (White mold)).